The primary structure comprises 268 residues: Single-stranded DNA-binding protein WHY3, chloroplastic (268 aa).

The transit peptide at 1–75 (MSQLLSSPPM…KQRFGDSSSS (75 aa)) directs the protein to the chloroplast. The segment at 93 to 98 (KGKAAL) is required for ssDNA binding. A Nuclear localization signal motif is present at residues 171 to 185 (KGKGSDEGKVRKVLK).

Belongs to the Whirly family. Homotetramer.

It localises to the plastid. The protein resides in the chloroplast. It is found in the nucleus. Its function is as follows. Single-stranded DNA-binding protein that functions in both chloroplasts and nucleus. In chloroplasts, maintains plastid genome stability by preventing break-induced and short homology-dependent illegitimate recombinations. In the nucleus, is recruited to a distal element upstream of the kinesin KP1 to mediate the transcriptional repression of KP1. Can bind double-stranded DNA in vivo. This is Single-stranded DNA-binding protein WHY3, chloroplastic (WHY3) from Arabidopsis thaliana (Mouse-ear cress).